A 357-amino-acid chain; its full sequence is Cyclin-dependent kinase-like 1 (357 aa).

Positions 4–287 (YEKIGKIGEG…CEQLLHHPYF (284 aa)) constitute a Protein kinase domain. Residues 10 to 18 (IGEGSYGVV) and lysine 33 each bind ATP. A [NKR]KIAxRE motif is present at residues 45–51 (KKIALRE). Residue aspartate 126 is the Proton acceptor of the active site.

The protein belongs to the protein kinase superfamily. CMGC Ser/Thr protein kinase family. CDC2/CDKX subfamily. Highly expressed in kidney, and to a lower extent in ovary.

It is found in the cytoplasm. The protein localises to the nucleus. The enzyme catalyses L-seryl-[protein] + ATP = O-phospho-L-seryl-[protein] + ADP + H(+). It carries out the reaction L-threonyl-[protein] + ATP = O-phospho-L-threonyl-[protein] + ADP + H(+). The chain is Cyclin-dependent kinase-like 1 from Homo sapiens (Human).